A 506-amino-acid polypeptide reads, in one-letter code: PHD finger protein 10 (506 aa).

2 disordered regions span residues 1–66 (MAAV…QDFG) and 293–377 (DPEL…SVSG). Residues 23-35 (VKEDNSNDTKDPE) show a composition bias toward basic and acidic residues. Positions 52 to 66 (GDSTPSCENSNQDFG) are enriched in polar residues. The segment at 90–299 (MLQEQVSEYL…DPLDPELLAL (210 aa)) is SAY. Positions 326–338 (SIDSSSMNMSESD) are enriched in low complexity. The span at 353-367 (KVKEKSSTPRKEGSK) shows a compositional bias: basic and acidic residues. Residues 387–444 (ICGICLKGKDANKKGRSERLIHCSQCDNSGHPSCLDMSAELVAVIKKYPWQCMECKTC) form a PHD-type 1; degenerate zinc finger. The PHD-type 2; degenerate zinc-finger motif lies at 446 to 489 (ICGQPHHEEEMMFCDTCDRGYHTFCVGLGALPSGRWICDCCQKV).

It belongs to the SAYP family. As to quaternary structure, component of neural progenitors-specific chromatin remodeling complex (npBAF complex), a subfamily of ATP-dependent SWI/SNF chromatin remodeling complexes.

It localises to the nucleus. Functionally, involved in transcription activity regulation by chromatin remodeling in the context of the neural progenitors-specific chromatin remodeling complex (npBAF complex). May play a role in the proliferation of neural progenitors. This is PHD finger protein 10 (phf10) from Xenopus laevis (African clawed frog).